Reading from the N-terminus, the 97-residue chain is Putative ankyrin repeat protein RBE_0357 (97 aa).

Residues 24–54 (YGKTALHYAYTKRNIDIIKILLKCPGIKICI) form an ANK repeat.

The polypeptide is Putative ankyrin repeat protein RBE_0357 (Rickettsia bellii (strain RML369-C)).